The sequence spans 260 residues: Glutathione S-transferase domain-containing protein DDB_G0274223 (260 aa).

One can recognise a GST N-terminal domain in the interval 7–96; sequence KVDYIFYTNN…YLAQKYNTFL (90 aa). Positions 102–233 constitute a GST C-terminal domain; the sequence is NPHENSDVIT…GFKTFNPSAL (132 aa).

It belongs to the GST superfamily.

The chain is Glutathione S-transferase domain-containing protein DDB_G0274223 from Dictyostelium discoideum (Social amoeba).